A 359-amino-acid chain; its full sequence is Ribosomal RNA small subunit methyltransferase H (359 aa).

S-adenosyl-L-methionine is bound by residues 39–41, aspartate 58, phenylalanine 87, aspartate 108, and glutamine 115; that span reads AGH. The disordered stretch occupies residues 339–359; that stretch reads IQGSASPGRAKNTARIRTRRG. Basic residues predominate over residues 350–359; that stretch reads NTARIRTRRG.

This sequence belongs to the methyltransferase superfamily. RsmH family.

It is found in the cytoplasm. It catalyses the reaction cytidine(1402) in 16S rRNA + S-adenosyl-L-methionine = N(4)-methylcytidine(1402) in 16S rRNA + S-adenosyl-L-homocysteine + H(+). Its function is as follows. Specifically methylates the N4 position of cytidine in position 1402 (C1402) of 16S rRNA. In Bifidobacterium longum (strain DJO10A), this protein is Ribosomal RNA small subunit methyltransferase H.